Reading from the N-terminus, the 319-residue chain is Ribosomal RNA large subunit methyltransferase F (319 aa).

This sequence belongs to the methyltransferase superfamily. METTL16/RlmF family.

The protein resides in the cytoplasm. The catalysed reaction is adenosine(1618) in 23S rRNA + S-adenosyl-L-methionine = N(6)-methyladenosine(1618) in 23S rRNA + S-adenosyl-L-homocysteine + H(+). Specifically methylates the adenine in position 1618 of 23S rRNA. The polypeptide is Ribosomal RNA large subunit methyltransferase F (Aliivibrio fischeri (strain ATCC 700601 / ES114) (Vibrio fischeri)).